A 489-amino-acid chain; its full sequence is MFS-type transporter MFS19 (489 aa).

The span at 1 to 12 (MAHSTAGDRDPE) shows a compositional bias: basic and acidic residues. Positions 1-42 (MAHSTAGDRDPEVGSEQHSSIAQLHTESMSDPWGDSNSPENP) are disordered. Residues 16–41 (EQHSSIAQLHTESMSDPWGDSNSPEN) show a composition bias toward polar residues. The helical transmembrane segment at 52–72 (FHVAIVSIFTLTANLAATMFA) threads the bilayer. N-linked (GlcNAc...) asparagine glycans are attached at residues asparagine 83 and asparagine 86. Transmembrane regions (helical) follow at residues 91–111 (AMTVSLYVLGFAFGPLLLAPL), 127–147 (VYIAFTVGCAFSTNVSMFLVF), 149–169 (FLCGCAASGPMSIGGGTVADI), 180–200 (ALFAMGPLLGPVLGPIIGGYV), 208–228 (WTFRIILIMSGIIGLATMFFM), 282–302 (PIVLLISLYTGVLFGLIFLLF), 321–341 (GLAYLGLGIGMFLGLVVFSIL), 361–381 (LILMKWFGPITPLGCFMYGWS), 388–408 (WIVPILGTSIIGFGSLFVVIP), 425–445 (ALAANLLVRSPFGAFLGLVAA), and 454–474 (GWGNSVLGFITLAFTPVPWLF).

It belongs to the major facilitator superfamily.

The protein localises to the cell membrane. Functionally, MFS-type efflux pump involved in the modulation susceptibility to various compounds including cumyl hydroperoxide, potassium superoxide, many singlet oxygen-generating compounds (eosin Y, rose Bengal, hematoporphyrin, methylene blue, and cercosporin), and the cell wall biosynthesis inhibitor Congo red. Involved in oxidative stress tolerance, colonization, and lesion formation. In Alternaria alternata (Alternaria rot fungus), this protein is MFS-type transporter MFS19.